Reading from the N-terminus, the 1764-residue chain is Cilia- and flagella-associated protein 44 (1764 aa).

WD repeat units lie at residues 115-157, 160-199, 208-248, 255-294, 361-400, 454-493, and 495-534; these read GTER…IVLR, AFSQDVYGVAFSPYFEGQLTTSGQGHIRFWRMASTFTGLK, GNVE…VVLT, CHDGPIEALLLDRPAGRVLSAGADGRVRMWDFGAVNDAEP, HPAGAVAGLQLSARTHTALVASADGCLRALDYVSGAVLAE, AHKGAVAALAVSADGGRLVSAGEDGSVFFFDLTAQPQPGT, and VPGMPACGLLAPRAFIKLPSGSGTVTCGVWEAAEGGGVLL. The interval 570–654 is disordered; the sequence is QLVVPKPKRP…GGPSSTTGEL (85 aa). Residues 575–584 are compositionally biased toward basic residues; the sequence is KPKRPKKKKG. 2 stretches are compositionally biased toward basic and acidic residues: residues 585–596 and 604–628; these read KNDGEEGDKEGG and GEDKGGEQADGEGGSKEGGEEGRAA. Residues 629-641 show a composition bias toward acidic residues; it reads EEEEEEEADDEAD. 3 WD repeats span residues 649–692, 707–752, and 753–791; these read STTG…PLAA, AHAG…LHDM, and QSGRVSGLGLSHDGAYLVTAAADGALHLLALALPPELAP. Positions 821 to 850 form a coiled coil; that stretch reads YTLEEEKQQAERDQQVREAEEKKLSVRQRL. Disordered stretches follow at residues 972 to 1003 and 1426 to 1468; these read AAAGGEGGAGGRDTDARGKGSDTGGGPGGDAA and KKKA…CPPG. Residues 1434-1462 show a composition bias toward acidic residues; sequence GEDDYDSEEDEEDEDMGDDEVDDDDDGGE. Coiled coils occupy residues 1479–1517, 1567–1674, and 1729–1758; these read DLREKRLDEEDMIAEFTKTIEVLRKEKEALAKKQRLVEQ, LVFS…DAKI, and EERDALVALVNAQAAELDRLKGQLLALRRK.

This sequence belongs to the CFAP44 family.

The protein localises to the cell projection. It localises to the cilium. Its subcellular location is the flagellum. It is found in the cytoplasm. The protein resides in the cytoskeleton. The protein localises to the flagellum axoneme. In terms of biological role, flagellar protein involved in sperm flagellum axoneme organization and function. In Chlamydomonas reinhardtii (Chlamydomonas smithii), this protein is Cilia- and flagella-associated protein 44.